Consider the following 414-residue polypeptide: Gamma-glutamyl phosphate reductase (414 aa).

Belongs to the gamma-glutamyl phosphate reductase family.

The protein resides in the cytoplasm. It carries out the reaction L-glutamate 5-semialdehyde + phosphate + NADP(+) = L-glutamyl 5-phosphate + NADPH + H(+). It participates in amino-acid biosynthesis; L-proline biosynthesis; L-glutamate 5-semialdehyde from L-glutamate: step 2/2. Its function is as follows. Catalyzes the NADPH-dependent reduction of L-glutamate 5-phosphate into L-glutamate 5-semialdehyde and phosphate. The product spontaneously undergoes cyclization to form 1-pyrroline-5-carboxylate. This Francisella philomiragia subsp. philomiragia (strain ATCC 25017 / CCUG 19701 / FSC 153 / O#319-036) protein is Gamma-glutamyl phosphate reductase.